Reading from the N-terminus, the 178-residue chain is MDDTLNQLNPSMSRRQLLNFFTGAIVAATASAAIYPATKFFMPPAESTDAEGGVLAKDKIGHPIPASQILVQASGTRALIAGLAGEPTYLTVREDGTLDPMGIVNNCTHLGCTFPWNPVDQQFQCPCHGSRYDAQGSVERGPANRPLKLVHVQVKDDYIWISSWQETDPRTGEKPWWV.

The chain crosses the membrane as a helical span at residues Leu17–Pro36. The region spanning Gly61–Ile161 is the Rieske domain. Positions 107, 109, 125, and 128 each coordinate [2Fe-2S] cluster. An intrachain disulfide couples Cys112 to Cys127.

Belongs to the Rieske iron-sulfur protein family. In terms of assembly, the 4 large subunits of the cytochrome b6-f complex are cytochrome b6, subunit IV (17 kDa polypeptide, PetD), cytochrome f and the Rieske protein, while the 4 small subunits are PetG, PetL, PetM and PetN. The complex functions as a dimer. [2Fe-2S] cluster serves as cofactor.

The protein resides in the cellular thylakoid membrane. The catalysed reaction is 2 oxidized [plastocyanin] + a plastoquinol + 2 H(+)(in) = 2 reduced [plastocyanin] + a plastoquinone + 4 H(+)(out). In terms of biological role, component of the cytochrome b6-f complex, which mediates electron transfer between photosystem II (PSII) and photosystem I (PSI), cyclic electron flow around PSI, and state transitions. The protein is Cytochrome b6-f complex iron-sulfur subunit 2 of Trichormus variabilis (strain ATCC 29413 / PCC 7937) (Anabaena variabilis).